Reading from the N-terminus, the 356-residue chain is Branched-chain-amino-acid transaminase 1 (356 aa).

Lys197 is subject to N6-(pyridoxal phosphate)lysine.

Belongs to the class-IV pyridoxal-phosphate-dependent aminotransferase family. The cofactor is pyridoxal 5'-phosphate.

It catalyses the reaction L-leucine + 2-oxoglutarate = 4-methyl-2-oxopentanoate + L-glutamate. The enzyme catalyses L-isoleucine + 2-oxoglutarate = (S)-3-methyl-2-oxopentanoate + L-glutamate. It carries out the reaction L-valine + 2-oxoglutarate = 3-methyl-2-oxobutanoate + L-glutamate. Its pathway is amino-acid biosynthesis; L-isoleucine biosynthesis; L-isoleucine from 2-oxobutanoate: step 4/4. The protein operates within amino-acid biosynthesis; L-leucine biosynthesis; L-leucine from 3-methyl-2-oxobutanoate: step 4/4. It functions in the pathway amino-acid biosynthesis; L-valine biosynthesis; L-valine from pyruvate: step 4/4. With respect to regulation, inhibited by canaline. Functionally, transaminates branched-chain amino acids and ketoglutarate. Involved in the final step of the methionine regeneration pathway, where ketomethiobutyrate (KMTB) is converted to methionine via a transamination. The amino donor preference is isoleucine, leucine, valine, phenylalanine, and tyrosine. In Bacillus subtilis (strain 168), this protein is Branched-chain-amino-acid transaminase 1 (ilvE).